A 341-amino-acid chain; its full sequence is Thymidine kinase (341 aa).

Position 19-26 (19-26 (GAYGIGKT)) interacts with ATP. Glu48 serves as the catalytic Proton acceptor. Residues Tyr66 and Gln90 each coordinate substrate. ATP is bound at residue Arg183. A substrate-binding site is contributed by Arg189.

It belongs to the herpesviridae thymidine kinase family. As to quaternary structure, homodimer.

The catalysed reaction is thymidine + ATP = dTMP + ADP + H(+). In terms of biological role, catalyzes the transfer of the gamma-phospho group of ATP to thymidine to generate dTMP in the salvage pathway of pyrimidine synthesis. The dTMP serves as a substrate for DNA polymerase during viral DNA replication. Allows the virus to be reactivated and to grow in non-proliferative cells lacking a high concentration of phosphorylated nucleic acid precursors. This Varicella-zoster virus (strain Oka vaccine) (HHV-3) protein is Thymidine kinase.